A 501-amino-acid chain; its full sequence is Ribose import ATP-binding protein RbsA (501 aa).

ABC transporter domains are found at residues 6-242 (LQLS…VGRK) and 253-495 (KHGE…VGKK). 38–45 (GENGAGKS) is an ATP binding site.

The protein belongs to the ABC transporter superfamily. Ribose importer (TC 3.A.1.2.1) family. In terms of assembly, the complex is composed of an ATP-binding protein (RbsA), two transmembrane proteins (RbsC) and a solute-binding protein (RbsB).

It localises to the cell inner membrane. The enzyme catalyses D-ribose(out) + ATP + H2O = D-ribose(in) + ADP + phosphate + H(+). Its function is as follows. Part of the ABC transporter complex RbsABC involved in ribose import. Responsible for energy coupling to the transport system. The chain is Ribose import ATP-binding protein RbsA from Vibrio parahaemolyticus serotype O3:K6 (strain RIMD 2210633).